Here is a 281-residue protein sequence, read N- to C-terminus: MKNIGININTDKDISRNILDKIFQYIHEECSEAKIKVFYDSKGLDNEESRALDAVMVLGGDGTILGTARALAKYDVPIFGINRGHLGFLAEIELEDCKKAIKNLFKGQYKIENRIMLKCDLKGIDKKDDFLALNDIVLTKGNLSRIVKYSIYVDDVWYTTFVADGVIVATPTGSTAYSLSAGGPIVYPDLDVLEIAPICPHSLGIRPILLNGNSKINIRVLKKYEDPVLTIDGQRYKKVTVNEVTISKSEYKCRLIKFKDKDYFKILRTKISYRSRECEGE.

Asp61 functions as the Proton acceptor in the catalytic mechanism. Residues 61-62 (DG), 134-135 (ND), Arg145, Asp164, 175-180 (TAYSLS), and Gln234 each bind NAD(+).

It belongs to the NAD kinase family. A divalent metal cation serves as cofactor.

It is found in the cytoplasm. The catalysed reaction is NAD(+) + ATP = ADP + NADP(+) + H(+). In terms of biological role, involved in the regulation of the intracellular balance of NAD and NADP, and is a key enzyme in the biosynthesis of NADP. Catalyzes specifically the phosphorylation on 2'-hydroxyl of the adenosine moiety of NAD to yield NADP. The polypeptide is NAD kinase (Clostridium botulinum (strain Loch Maree / Type A3)).